Here is a 439-residue protein sequence, read N- to C-terminus: 5-hydroxybenzimidazole synthase (439 aa).

Residues Met96, Tyr125, His164, 187–189, 228–231, and Glu267 each bind substrate; these read SKG and NGIR. His271 is a binding site for Zn(2+). A substrate-binding site is contributed by Tyr294. Zn(2+) is bound at residue His335. Residues Cys410, Cys413, and Cys417 each contribute to the [4Fe-4S] cluster site.

It belongs to the ThiC family. 5-hydroxybenzimidazole synthase subfamily. As to quaternary structure, homodimer. Requires [4Fe-4S] cluster as cofactor.

It carries out the reaction 5-amino-1-(5-phospho-beta-D-ribosyl)imidazole + AH2 + S-adenosyl-L-methionine = 5-hydroxybenzimidazole + 5'-deoxyadenosine + formate + L-methionine + A + NH4(+) + phosphate + 2 H(+). In terms of biological role, catalyzes the conversion of aminoimidazole ribotide (AIR) to 5-hydroxybenzimidazole (5-HBI) in a radical S-adenosyl-L-methionine (SAM)-dependent reaction. Is thus involved in the anaerobic biosynthesis of the benzimidazole lower axial ligand of the cobamide produced by D.autotrophicum. This chain is 5-hydroxybenzimidazole synthase, found in Desulforapulum autotrophicum (strain ATCC 43914 / DSM 3382 / VKM B-1955 / HRM2) (Desulfobacterium autotrophicum).